A 452-amino-acid polypeptide reads, in one-letter code: Scaffold protein ILK (452 aa).

An N-acetylmethionine modification is found at Met-1. ANK repeat units lie at residues 2 to 30 (DDIF…LNQG), 31 to 63 (DDHG…INVM), 64 to 96 (NRGD…INAV), 97 to 129 (NEHG…VSIC), and 130 to 174 (NKYG…GTTR). Residues 33–139 (HGFSPLHWAC…NKYGEMPVDK (107 aa)) are interaction with LIMS1. Thr-173 is modified (phosphothreonine; by PAK1). The interval 180–212 (GTLNKHSGIDFKQLNFLTKLNENHSGELWKGRW) is PH-like; mediates interaction with TGFB1I1. Ser-186 bears the Phosphoserine mark. The region spanning 193 to 446 (LNFLTKLNEN…PKFDMIVPIL (254 aa)) is the Protein kinase domain. ATP-binding residues include Asn-200, Asn-202, His-203, Ser-204, and Lys-220. Position 246 is a phosphoserine; by PAK1 (Ser-246). Residues His-270, Met-272, and Asn-279 each contribute to the ATP site. Asp-339 serves as a coordination point for Mg(2+). ATP is bound at residue Lys-341. Residues 363–371 (KKPEDTNRR) carry the Nuclear localization signal motif. Lys-426 is subject to N6-acetyllysine.

The protein belongs to the protein kinase superfamily. TKL Ser/Thr protein kinase family. Component of the heterotrimeric IPP (ILK-PINCH-PARVIN) complex composed of ILK, LIMS1/PINCH and PARVA; the complex binds to F-actin via the C-terminal tail of LIMS1 and the N-terminal region of PARVA, promoting F-actin filament bundling. Formation of the IPP complex is dependent on protein kinase C and precedes integrin-mediated cell adhesion and spreading. ILK also interacts with LIMS2/PINCH2 and with PARVB and PARVG which may substitute for LIMS1 and PARVA in the IPP complex; PARVA and PARVB compete for the same binding site. Interaction with PARVG promotes the establishment of cell polarity required for leukocyte migration. Interacts with the cytoplasmic domain of integrin ITGB1 and may also interact with integrins ITGB2, ITGB3 and/or ITGB5. Interacts probably also with TGFB1I1. Interacts (via ANK repeats) with EPHA1 (via SAM domain); stimulated by EFNA1 but independent of the kinase activity of EPHA1. Interacts with FERMT2. Interacts with LIMD2; leading to activate the protein kinase activity. Interacts with PXN/PAXILLIN (via LD motif 4). Interacts with CCDC25 (via cytoplasmic region); initiating the ILK-PARVB cascade to induce cytoskeleton rearrangement and directional migration of cells. Interacts with IQGAP1; the interaction is required for localization of IQGAP1 to the cell cortex. Phosphorylation by PAK1 modulates ILK subcellular location by promoting its nuclear export. As to expression, highly expressed in heart followed by skeletal muscle, pancreas and kidney. Weakly expressed in placenta, lung and liver.

It is found in the cell junction. The protein localises to the focal adhesion. Its subcellular location is the cell membrane. The protein resides in the cell projection. It localises to the lamellipodium. It is found in the cytoplasm. The protein localises to the myofibril. Its subcellular location is the sarcomere. The protein resides in the nucleus. It localises to the cytoskeleton. It is found in the microtubule organizing center. The protein localises to the centrosome. Its subcellular location is the cell cortex. Scaffold protein which mediates protein-protein interactions during a range of cellular events including focal adhesion assembly, cell adhesion and cell migration. Regulates integrin-mediated signal transduction by contributing to inside-out integrin activation. Recruits PARVA and LIMS1/PITCH to form the heterotrimeric IPP (ILK-PINCH-PARVIN) complex which binds to F-actin via the C-terminal tail of LIMS1 and the N-terminal region of PARVA, promoting F-actin filament bundling, a process required to generate force for actin cytoskeleton reorganization and subsequent dynamic cell adhesion events such as cell spreading and migration. Binding to PARVA promotes effective assembly of ILK into focal adhesions while PARVA-bound ILK can simultaneously engage integrin-beta cytoplasmic tails to mediate cell adhesion. Plays a role with PARVG in promoting the cell adhesion and spreading of leukocytes. Acts as an upstream effector of both AKT1/PKB and GSK3. Mediates trafficking of caveolae to the cell surface in an ITGB1-dependent manner by promoting the recruitment of IQGAP1 to the cell cortex which cooperates with its effector DIAPH1 to locally stabilize microtubules and allow stable insertion of caveolae into the plasma membrane. Required for the maintenance of mitotic spindle integrity by promoting phosphorylation of TACC3 by AURKA. Associates with chromatin and may act as a negative regulator of transcription when located in the nucleus. In Homo sapiens (Human), this protein is Scaffold protein ILK.